We begin with the raw amino-acid sequence, 120 residues long: MVRILANGEIVQDDDPRVRTTTQHRSSSSQQGFFNRGHGAPPGGPGPRQQQAGARLGAAQSPFSDLNRQLVNMGFPQWHLGNHVVEPVTSILLLFLLMMLGVRGLLLVGLVYLVSHLSQR.

The disordered stretch occupies residues 12–59; it reads QDDDPRVRTTTQHRSSSSQQGFFNRGHGAPPGGPGPRQQQAGARLGAA. Low complexity-rich tracts occupy residues 19–39 and 47–59; these read RTTTQHRSSSSQQGFFNRGHG and PRQQQAGARLGAA. Ser61 is modified (phosphoserine). Residues 91–111 form a helical membrane-spanning segment; that stretch reads ILLLFLLMMLGVRGLLLVGLV.

The protein belongs to the FAM241 family.

It localises to the membrane. Its function is as follows. May play a role in lysosome homeostasis. The chain is Protein FAM241B from Mus musculus (Mouse).